The chain runs to 504 residues: Bacterial leucyl aminopeptidase (504 aa).

Residues 1–21 (MKYTKTLLAMVLSATFCQAYA) form the signal peptide. Positions 22–106 (EDKVWISIGA…AMPTTLASFV (85 aa)) are excised as a propeptide. Zn(2+)-binding residues include histidine 203, aspartate 223, glutamate 258, and aspartate 285. Cysteine 329 and cysteine 333 are joined by a disulfide. Histidine 362 lines the Zn(2+) pocket. Residues 406–504 (LEDGVPVTDL…SGASLKASTF (99 aa)) constitute a propeptide, removed in mature form.

It belongs to the peptidase M28 family. M28E subfamily. It depends on Zn(2+) as a cofactor.

The protein localises to the secreted. The enzyme catalyses Release of an N-terminal amino acid, preferentially leucine, but not glutamic or aspartic acids.. This chain is Bacterial leucyl aminopeptidase, found in Vibrio proteolyticus (Aeromonas proteolytica).